We begin with the raw amino-acid sequence, 226 residues long: Clarin-3 (226 aa).

Residues 8-28 (LMFLSGFLTSLGSVVVICSIL) form a helical membrane-spanning segment. N-linked (GlcNAc...) asparagine glycosylation is present at N46. A run of 3 helical transmembrane segments spans residues 92–112 (VVILLLILSLAASVLSSVFTF), 128–148 (GVYTWNGLSASFVFLAMVLFV), and 181–201 (FWLTLHVIFLNIVTAVIIIFY).

This sequence belongs to the clarin family.

It localises to the membrane. This is Clarin-3 (Clrn3) from Mus musculus (Mouse).